The primary structure comprises 86 residues: Omega-theraphotoxin-Hhn1a 1 (86 aa).

Residues 1–21 (MKSIVFVALFGLALLAVVCSA) form the signal peptide. Positions 22 to 50 (SEDAHKELLKEVVRAMVVDKTDAVQAEER) are excised as a propeptide. Cystine bridges form between C52-C66, C59-C71, and C65-C78.

Belongs to the neurotoxin 10 (Hwtx-1) family. 17 (Hntx-9) subfamily. As to expression, expressed by the venom gland.

The protein localises to the secreted. Its function is as follows. Ion channel inhibitor. This is Omega-theraphotoxin-Hhn1a 1 from Cyriopagopus hainanus (Chinese bird spider).